The sequence spans 321 residues: GDP-L-fucose synthase (321 aa).

14-20 (GGSGLVG) contributes to the NADP(+) binding site. Tyrosine 143 (proton donor/acceptor) is an active-site residue. NADP(+) is bound by residues lysine 147, 170-173 (PTNV), and histidine 186. The substrate site is built by lysine 194, tryptophan 208, arginine 215, and aspartate 277.

Belongs to the NAD(P)-dependent epimerase/dehydratase family. Fucose synthase subfamily. In terms of assembly, homodimer.

The catalysed reaction is GDP-beta-L-fucose + NADP(+) = GDP-4-dehydro-alpha-D-rhamnose + NADPH + H(+). It functions in the pathway nucleotide-sugar biosynthesis; GDP-L-fucose biosynthesis via de novo pathway; GDP-L-fucose from GDP-alpha-D-mannose: step 2/2. Its function is as follows. Catalyzes the two-step NADP-dependent conversion of GDP-4-dehydro-6-deoxy-D-mannose to GDP-fucose, involving an epimerase and a reductase reaction. The protein is GDP-L-fucose synthase of Homo sapiens (Human).